We begin with the raw amino-acid sequence, 567 residues long: Cytochrome P450 monooxygenase 231 (567 aa).

A helical membrane pass occupies residues 3 to 23 (VSTNELAILAIVLLATGVLFY). N-linked (GlcNAc...) asparagine glycosylation is found at N81 and N223. C475 lines the heme pocket.

This sequence belongs to the cytochrome P450 family. It depends on heme as a cofactor.

It is found in the membrane. Its pathway is secondary metabolite biosynthesis. In terms of biological role, cytochrome P450 monooxygenase that is able to use anthracene, carbazole, pyrene, and phenanthrene as substrates for oxidation. These multifunctional properties against a series of polycyclic aromatic hydrocarbons (PAHs) suggest that CYP231 would play important roles, at least in part, in fungal metabolic systems involved in xenobiotic detoxification. The protein is Cytochrome P450 monooxygenase 231 of Postia placenta (strain ATCC 44394 / Madison 698-R) (Brown rot fungus).